The sequence spans 482 residues: Auxin transporter-like protein 4 (482 aa).

Residues 1-59 are Cytoplasmic-facing; it reads MLSQNQAEEAIVTNMNETEQEGGSSLEEIAEDQSMFNFKSFLWHGGSVWDAWFSCASNQ. A helical transmembrane segment spans residues 60-77; it reads VAQVLLTLPYSFSQLGMV. At 78-79 the chain is on the extracellular side; that stretch reads SG. A helical transmembrane segment spans residues 80–100; it reads IVFQIFYGLIGSWTAYLISVL. Residues 101–135 are Cytoplasmic-facing; that stretch reads YVEYRARKEKENVNFKNHVIQWFEVLDGLLGRYWK. The helical transmembrane segment at 136-156 threads the bilayer; that stretch reads ALGLAFNCTFLLFGSVIQLIA. The Extracellular segment spans residues 157-172; it reads CASNIYYINDKLDKRT. The chain crosses the membrane as a helical span at residues 173–193; it reads WTYIFGACCATTVFIPSFHNY. Residues 194–196 are Cytoplasmic-facing; it reads RIW. Residues 197–217 traverse the membrane as a helical segment; sequence SFLGLGMTTYTAWYMAIAAIV. The Extracellular segment spans residues 218-232; sequence NGQIENVVHSGPTKL. A helical membrane pass occupies residues 233–253; it reads VLYFTGATNILYTFGGHAVTV. Over 254 to 266 the chain is Cytoplasmic; sequence EIMHAMWKPQKFK. The helical transmembrane segment at 267 to 287 threads the bilayer; the sequence is YIYFLATLYVFTLTIPSAVAV. Topologically, residues 288-314 are extracellular; that stretch reads YWAFGDELLNHSNAFSLLPKNGFRDAA. Asparagine 297 carries N-linked (GlcNAc...) asparagine glycosylation. Residues 315 to 335 form a helical membrane-spanning segment; the sequence is VILMLIHQFITFGFACTPLYF. The Cytoplasmic segment spans residues 336-356; sequence VWEKVIGMHDTKSICLRALVR. Residues 357–377 traverse the membrane as a helical segment; the sequence is LPVVIPIWFLAIIFPFFGPIN. A topological domain (extracellular) is located at residue serine 378. The helical transmembrane segment at 379-399 threads the bilayer; the sequence is AVGALLVTFTVYIIPALAHML. Over 400–422 the chain is Cytoplasmic; it reads TYRTASARKNAVEKPPSFLPSWT. Residues 423–443 form a helical membrane-spanning segment; it reads AVYVLNAFIVVWVLVVGFGFG. The Extracellular portion of the chain corresponds to 444-482; it reads GWASMTNFIRQIDTFGLFAKCYQCKPPTPPQAPSPHARH.

Belongs to the amino acid/polyamine transporter 2 family. Amino acid/auxin permease (AAAP) (TC 2.A.18.1) subfamily. Shoots and roots of nodulating plants, at low levels.

It localises to the cell membrane. In terms of biological role, carrier protein involved in proton-driven auxin influx. Mediates the formation of auxin gradient from developing leaves (site of auxin biosynthesis) to tips by contributing to the loading of auxin in vascular tissues and facilitating acropetal (base to tip) auxin transport within inner tissues of the root apex, and basipetal (tip to base) auxin transport within outer tissues of the root apex. May be involved in lateral roots and nodules formation. The protein is Auxin transporter-like protein 4 (LAX4) of Medicago truncatula (Barrel medic).